A 207-amino-acid chain; its full sequence is Large ribosomal subunit protein uL4 (207 aa).

The tract at residues 44–78 (MRQGTHKTKNRAEVSGGGRKPWRQKGTGRARQGSI) is disordered.

The protein belongs to the universal ribosomal protein uL4 family. As to quaternary structure, part of the 50S ribosomal subunit.

Its function is as follows. One of the primary rRNA binding proteins, this protein initially binds near the 5'-end of the 23S rRNA. It is important during the early stages of 50S assembly. It makes multiple contacts with different domains of the 23S rRNA in the assembled 50S subunit and ribosome. In terms of biological role, this protein when expressed in E.coli represses the endogenous S10 operon; this may not occur in B.stearothermophilus however. Functionally, forms part of the polypeptide exit tunnel. This chain is Large ribosomal subunit protein uL4 (rplD), found in Geobacillus stearothermophilus (Bacillus stearothermophilus).